A 24-amino-acid polypeptide reads, in one-letter code: Erythromycin resistance leader peptide (24 aa).

Over residues 1–14 (MSMGIAARPPRAAL) the composition is skewed to low complexity. Residues 1 to 24 (MSMGIAARPPRAALLPPPSVPRSR) form a disordered region. Over residues 15–24 (LPPPSVPRSR) the composition is skewed to pro residues.

Functionally, this peptide is involved in the control mechanism of the synthesis of the macrolide-lincosamide-streptogramin B resistance protein. This Streptomyces fradiae (Streptomyces roseoflavus) protein is Erythromycin resistance leader peptide.